We begin with the raw amino-acid sequence, 186 residues long: uncharacterized protein (186 aa).

The Cupin type-2 domain occupies 89–164 (LMSLGIGEDI…NTPLKLYSIY (76 aa)). Residue 117–124 (GIVKMGKS) participates in ATP binding.

This is an uncharacterized protein from Bacillus subtilis (strain 168).